The chain runs to 489 residues: Glutamyl-tRNA(Gln) amidotransferase subunit A (489 aa).

Active-site charge relay system residues include Lys-75 and Ser-150. Ser-174 serves as the catalytic Acyl-ester intermediate.

This sequence belongs to the amidase family. GatA subfamily. In terms of assembly, heterotrimer of A, B and C subunits.

The catalysed reaction is L-glutamyl-tRNA(Gln) + L-glutamine + ATP + H2O = L-glutaminyl-tRNA(Gln) + L-glutamate + ADP + phosphate + H(+). Allows the formation of correctly charged Gln-tRNA(Gln) through the transamidation of misacylated Glu-tRNA(Gln) in organisms which lack glutaminyl-tRNA synthetase. The reaction takes place in the presence of glutamine and ATP through an activated gamma-phospho-Glu-tRNA(Gln). In Gloeobacter violaceus (strain ATCC 29082 / PCC 7421), this protein is Glutamyl-tRNA(Gln) amidotransferase subunit A.